Reading from the N-terminus, the 979-residue chain is Oncostatin-M-specific receptor subunit beta (979 aa).

An N-terminal signal peptide occupies residues 1–27 (MALFAVFQTTFFLTLLSLRTYQSEVLA). Residues 28–740 (ERLPLTPVSL…VTTPDEHSSM (713 aa)) are Extracellular-facing. Asn163 carries an N-linked (GlcNAc...) asparagine glycan. Residues Cys245 and Cys255 are joined by a disulfide bond. Asn326 and Asn380 each carry an N-linked (GlcNAc...) asparagine glycan. Fibronectin type-III domains lie at 335 to 428 (NPFS…TLEA), 433 to 528 (APDV…DPEN), 529 to 623 (KEVE…SQEL), and 625 to 736 (PSDN…TPDE). The WSXWS motif signature appears at 415–419 (WSEWS). N-linked (GlcNAc...) asparagine glycans are attached at residues Asn446 and Asn580. A helical membrane pass occupies residues 741-761 (LIHILLPMVFCVLLIMVMCYL). The Cytoplasmic segment spans residues 762–979 (KSQWIKETCY…TLLDPGEHYC (218 aa)). Positions 770–778 (CYPDIPDPY) match the Box 1 motif motif. A phosphoserine mark is found at Ser826 and Ser889.

This sequence belongs to the type I cytokine receptor family. Type 2 subfamily. Heterodimer composed of OSMR and IL6ST (type II OSM receptor). Heterodimer with IL31RA to form the IL31 receptor. Expressed in keratinocytes (at protein level). Expressed at relatively high levels in all neural cells as well as fibroblast and epithelial cells.

Its subcellular location is the membrane. In terms of biological role, associates with IL31RA to form the IL31 receptor. Binds IL31 to activate STAT3 and possibly STAT1 and STAT5. Capable of transducing OSM-specific signaling events. The protein is Oncostatin-M-specific receptor subunit beta (OSMR) of Homo sapiens (Human).